We begin with the raw amino-acid sequence, 459 residues long: Phosphoglucosamine mutase (459 aa).

The active-site Phosphoserine intermediate is the S112. Mg(2+) contacts are provided by S112, D249, D251, and D253. Position 112 is a phosphoserine (S112).

It belongs to the phosphohexose mutase family. Requires Mg(2+) as cofactor. In terms of processing, activated by phosphorylation.

The catalysed reaction is alpha-D-glucosamine 1-phosphate = D-glucosamine 6-phosphate. In terms of biological role, catalyzes the conversion of glucosamine-6-phosphate to glucosamine-1-phosphate. This is Phosphoglucosamine mutase from Synechococcus sp. (strain RCC307).